Reading from the N-terminus, the 367-residue chain is MINVGLLFGSKSVEHEISIITAHQVLSFVDKNKYNIIPIYITKDGKWLTGKILEDLENFKNLERLEKKSKQISSISAKDGKLILHSNIKKITIDVCLLTFHGSNGEDGSIQGMLEFLNVPYTGCGMYSSMYTMDKVITKLILKEKNIPVVDFLYTNKKNYTNDFLNHCKEVLEYPMIVKPARLGSSIGVKKVNDKCELEEAIETAFSFDDKVIVEKWIDSRELNCAVMGYKNIVVSEIEEIKKQKDFFDYNEKYVQKGKKFSNHIIPAPIDENLKNTIKSIARDTFNALECHGNIRIDFLLSKDNKIYVNEVNSIPGALSYYLWQMSGFTFSQVIDNMISIAFEAFKDKKSKIYSIDTNLFDLKVEK.

Positions Lys139 to Ser340 constitute an ATP-grasp domain. Residue Lys169–Asn224 participates in ATP binding. Asp298, Glu311, and Asn313 together coordinate Mg(2+).

The protein belongs to the D-alanine--D-alanine ligase family. Mg(2+) serves as cofactor. The cofactor is Mn(2+).

The protein localises to the cytoplasm. The catalysed reaction is 2 D-alanine + ATP = D-alanyl-D-alanine + ADP + phosphate + H(+). Its pathway is cell wall biogenesis; peptidoglycan biosynthesis. Cell wall formation. This is D-alanine--D-alanine ligase from Thermosipho africanus (strain TCF52B).